The following is a 432-amino-acid chain: Small ribosomal subunit protein uS5m (432 aa).

Positions 110-130 are disordered; the sequence is AGARKGRGKRTKKKKRKDLNR. Residues 113-127 show a composition bias toward basic residues; the sequence is RKGRGKRTKKKKRKD. Residues 220–284 form the S5 DRBM domain; it reads FDTRILEVRN…NRAIHYLHYI (65 aa).

It belongs to the universal ribosomal protein uS5 family. In terms of assembly, component of the mitochondrial ribosome small subunit (28S) which comprises a 12S rRNA and about 30 distinct proteins.

Its subcellular location is the mitochondrion. In Mus musculus (Mouse), this protein is Small ribosomal subunit protein uS5m (Mrps5).